A 752-amino-acid chain; its full sequence is Protein GCN20 (752 aa).

An N-acetylalanine modification is found at alanine 2. ABC transporter domains are found at residues 199–464 (IHID…RKNA) and 532–748 (IQLQ…AAGV). Residues 232 to 239 (GQNGIGKS) and 565 to 572 (GANGCGKT) contribute to the ATP site.

It belongs to the ABC transporter superfamily. ABCF family. EF3 subfamily. In terms of assembly, interacts (via N-terminus) with GCN1 (via C-terminus); this interaction stimulates GCN2 kinase activity in response to amino acid starvation. The GCN1-GCN20 complex interacts with GCN2 on translating ribosomes in amino acid-starved cells; this association stimulates GCN2 kinase activation by uncharged tRNAs, and hence allowing GCN4 translational activation and derepression of amino acid biosynthetic genes. Associates with ribosomes.

In terms of biological role, acts as a positive activator of the GCN2 protein kinase activity in response to in response to low amino acid, carbon, or purine availability. Component of the GCN1-GCN20 complex that forms a complex with GCN2 on translating ribosomes; during this process, GCN20 helps GCN1 to act as a chaperone to facilitate delivery of uncharged tRNAs that enter the A site of ribosomes to the tRNA-binding domain of GCN2, and hence stimulating GCN2 kinase activity. Participates in gene-specific mRNA translation activation, such as the transcriptional activator GCN4, by promoting the GCN2-mediated phosphorylation of eukaryotic translation initiation factor 2 (eIF-2-alpha/SUI2) on 'Ser-52', and hence allowing GCN4-mediated reprogramming of amino acid biosynthetic gene expression to alleviate nutrient depletion. The sequence is that of Protein GCN20 from Saccharomyces cerevisiae (strain ATCC 204508 / S288c) (Baker's yeast).